We begin with the raw amino-acid sequence, 518 residues long: Laccase (518 aa).

An N-terminal signal peptide occupies residues 1 to 21 (MSRFQSLLSFVLVSLAAVANA). Plastocyanin-like domains lie at 23 to 148 (IGPV…FVVY) and 160 to 302 (IDND…ILRY). Asn-72 and Asn-75 each carry an N-linked (GlcNAc...) asparagine glycan. Cu cation contacts are provided by His-85, His-87, His-130, and His-132. 2 disulfide bridges follow: Cys-106–Cys-507 and Cys-138–Cys-226. An N-linked (GlcNAc...) asparagine glycan is attached at Asn-229. The tract at residues 308–330 (VEPTTTQTTSTKPLNEADLHPLT) is disordered. Asn-354, Asn-362, and Asn-398 each carry an N-linked (GlcNAc...) asparagine glycan. Residues 369–489 (SVPVLLQILS…AGFAVVLAED (121 aa)) enclose the Plastocyanin-like 3 domain. The Cu cation site is built by His-416, His-419, His-421, His-471, Cys-472, His-473, and His-477.

This sequence belongs to the multicopper oxidase family. It depends on Cu cation as a cofactor.

It localises to the secreted. It carries out the reaction 4 hydroquinone + O2 = 4 benzosemiquinone + 2 H2O. In terms of biological role, lignin degradation and detoxification of lignin-derived products. Cleaves the C-C and C-O bonds of some phenolic lignin model compounds (such as O- and P-quinols, aminophenols and phenylenediamine). May also be involved in synthesis of phenoxazinone pigments. The sequence is that of Laccase (LCC3-1) from Pycnoporus cinnabarinus (Cinnabar-red polypore).